An 895-amino-acid polypeptide reads, in one-letter code: MSTQNIDISDLKYNIDVNDIEIIDPFIGENKTDDQKYSNPFFLDHNGSEQKFTKTNILADEYKYVYILCLCDDFELNESNINRVNLFFEKDSVVSELTSQTNSITLVQCPFEIIKIASIRSGVVVVNKDVLEYFNHDSVDLLSRELVYLMLQTKESNVRNWIKMYKSDNNLNKFIQQKIFSSYYGINDERFDHEMIKSLGEINDFRFWENPSNCEININEAFKSRRLNINSSSKWNIPESEIEKFLFDFKNVSGSFKSHKYPPGPPDNSSSNTSGQQNTSNTSNTKFKKFKQVFYKIVDANDMLIDKQDVEDLLISNCLSEREKYYLVCLLLSSKNYCHYILNNHKVITSISDIISKYKPIIRYLMGFAWMSLYLEERVKRSKSIESDRFVFDLENASKPPVFPYNPQNPYTNPYFVMTVSSDLLNLSNNVSGVKQSLEYQSGIVDITEFKKRLNLFISGSHEKDILEGANWNNMVITGGSMTAILPRRNPLHALFTKESKADITYEELNRFYQEYYSNSDIDVACNHENIIDFIENVKHIQTIIAKNLGVKDSEIKTDDIKTLAIYINPKLLQSKCSSGEIPYDYDYILKNKDAREIKFYFHELYIEKKKLSNNKNKKILGSRINDNNYFNIIRYCEIEKVTIIINDYSYESDQVDYKIPEQNSGLETVFYLKDNDTIFIKFSETIKYKIHSRHLKHQFEVFRITDKEFFSCIGRFHLPCVRSYYNGTTCYLLPSAITAYMTFTNMDFKYFIGSHDPLNIINKYRLRGYGTILNENELKYYVKYIHVIDKVKKSFNLKDTDNAEKTLGCLDVTNDFFKPKKFIPEEFPLGLESPSYKDNPDITYITEDTISKLYKQNYPKYLADFNQYTTILPNGNIGPLKRWLIDAAYDLLNN.

The disordered stretch occupies residues 257–283; it reads KSHKYPPGPPDNSSSNTSGQQNTSNTS. Low complexity predominate over residues 268 to 283; that stretch reads NSSSNTSGQQNTSNTS.

This is an uncharacterized protein from Acanthamoeba polyphaga mimivirus (APMV).